We begin with the raw amino-acid sequence, 183 residues long: Adenine phosphoribosyltransferase (183 aa).

The protein belongs to the purine/pyrimidine phosphoribosyltransferase family. As to quaternary structure, homodimer.

The protein localises to the cytoplasm. It catalyses the reaction AMP + diphosphate = 5-phospho-alpha-D-ribose 1-diphosphate + adenine. The protein operates within purine metabolism; AMP biosynthesis via salvage pathway; AMP from adenine: step 1/1. Functionally, catalyzes a salvage reaction resulting in the formation of AMP, that is energically less costly than de novo synthesis. This is Adenine phosphoribosyltransferase from Sodalis glossinidius (strain morsitans).